The chain runs to 659 residues: Zinc finger protein 304 (659 aa).

One can recognise a KRAB domain in the interval 14-88; the sequence is VTFEDVFVYF…TAESGLFQKA (75 aa). 16 C2H2-type zinc fingers span residues 89–111, 115–139, 251–273, 279–301, 307–329, 335–357, 363–385, 391–413, 419–441, 447–469, 475–497, 503–525, 531–553, 559–581, 587–609, and 615–637; these read HPCE…QGSH, KLCT…QKQH, FRCL…RKIH, HVCK…QKFH, YTCS…QRVH, YDCS…QRIH, YKCN…QRFH, YECS…WRIH, YECI…RRVH, YVCS…QIIH, YECS…QKIH, YECG…QRIH, YECN…QRVH, YVCS…KKVH, YECS…QRVH, and YVCS…QKAH.

The protein belongs to the krueppel C2H2-type zinc-finger protein family. As to quaternary structure, probably part of a corepressor complex containing ZNF304, TRIM28, SETDB1 and DNMT1; leading to promoter hypermethylation and transcriptional silencing. Probably associates with Polycomb group (PcG) complexes; leading to trimethylation of 'Lys-27' of histone H3 (H3K27me3). Interacts with USP28. In terms of processing, deubiquitinated by USP28; the deubiquitination leads to the stabilization of ZNF304 from proteolytic degradation. In terms of tissue distribution, expressed in undifferentiated embryonic stem cells (ESCs). Expressed strongly in colorectal cancers cells (CRCs). Expressed strongly in ovarian carcinoma (OC) tumor cell lines compared to non-transformed ovarian epithelial cells (at protein level). Expressed in lymphoid tissues, thyroid, adrenal gland, prostate, pancreas and skeletal muscles.

Its subcellular location is the nucleus. In terms of biological role, acts as a transcriptional regulator and plays a role in gene silencing. Probably forms a corepressor complex required for activated KRAS-mediated promoter hypermethylation and transcriptional silencing of several tumor suppressor genes (TSGs) or other tumor-related genes in colorectal cancer (CRC) cells. Also required to maintain a transcriptionally repressive state of genes in undifferentiated embryonic stem cells (ESCs) by inducing trimethylation of 'Lys-27' of histone H3 (H3K27me3) in a Polycomb group (PcG) complexes-dependent manner. Associates at promoter regions of TSGs and mediates the recruitment of the corepressor complex containing the scaffolding protein TRIM28, methyltransferase DNMT1 and histone methyltransferase SETDB1 and/or the PcG complexes at those sites. Transcription factor involved in the metastatic cascade process by inducing cell migration and proliferation and gain resistance to anoikis of ovarian carcinoma (OC) cells via integrin-mediated signaling pathways. Associates with the ITGB1 promoter and positively regulates beta-1 integrin transcription expression. Promotes angiogenesis. Promotes tumor growth. The chain is Zinc finger protein 304 from Homo sapiens (Human).